Here is a 376-residue protein sequence, read N- to C-terminus: Erythronate-4-phosphate dehydrogenase (376 aa).

Substrate-binding residues include serine 45 and threonine 67. Aspartate 147 lines the NAD(+) pocket. Arginine 209 is a catalytic residue. Aspartate 233 is a binding site for NAD(+). Glutamate 238 is an active-site residue. The active-site Proton donor is the histidine 255. Residue glycine 258 participates in NAD(+) binding. Tyrosine 259 serves as a coordination point for substrate.

It belongs to the D-isomer specific 2-hydroxyacid dehydrogenase family. PdxB subfamily. As to quaternary structure, homodimer.

The protein localises to the cytoplasm. The enzyme catalyses 4-phospho-D-erythronate + NAD(+) = (R)-3-hydroxy-2-oxo-4-phosphooxybutanoate + NADH + H(+). The protein operates within cofactor biosynthesis; pyridoxine 5'-phosphate biosynthesis; pyridoxine 5'-phosphate from D-erythrose 4-phosphate: step 2/5. Its function is as follows. Catalyzes the oxidation of erythronate-4-phosphate to 3-hydroxy-2-oxo-4-phosphonooxybutanoate. This is Erythronate-4-phosphate dehydrogenase from Shewanella sp. (strain MR-4).